Here is a 74-residue protein sequence, read N- to C-terminus: U2-sicaritoxin-Sdo1a (74 aa).

An N-terminal signal peptide occupies residues 1–20; sequence MKLSFCFFLCAIVLFSFAEA. A propeptide spanning residues 21-39 is cleaved from the precursor; the sequence is RINPNQLKRLRELVRDDEP. Cystine bridges form between Cys42-Cys59, Cys49-Cys62, and Cys58-Cys71.

As to expression, expressed by the venom gland.

It is found in the secreted. The polypeptide is U2-sicaritoxin-Sdo1a (Hexophthalma dolichocephala (Afrotropical spider)).